The primary structure comprises 166 residues: Regulator of ribonuclease activity A (166 aa).

This sequence belongs to the RraA family. In terms of assembly, homotrimer. Binds to both RNA-binding sites in the C-terminal region of Rne and to RhlB.

It localises to the cytoplasm. Functionally, globally modulates RNA abundance by binding to RNase E (Rne) and regulating its endonucleolytic activity. Can modulate Rne action in a substrate-dependent manner by altering the composition of the degradosome. Modulates RNA-binding and helicase activities of the degradosome. In Histophilus somni (strain 2336) (Haemophilus somnus), this protein is Regulator of ribonuclease activity A.